The sequence spans 209 residues: Kynurenine formamidase (209 aa).

Substrate is bound at residue Trp18. The Zn(2+) site is built by His48, His52, and Asp54. Catalysis depends on His58, which acts as the Proton donor/acceptor. Zn(2+) is bound by residues His160 and Glu172.

Belongs to the Cyclase 1 superfamily. KynB family. As to quaternary structure, homodimer. Requires Zn(2+) as cofactor.

The enzyme catalyses N-formyl-L-kynurenine + H2O = L-kynurenine + formate + H(+). Its pathway is amino-acid degradation; L-tryptophan degradation via kynurenine pathway; L-kynurenine from L-tryptophan: step 2/2. In terms of biological role, catalyzes the hydrolysis of N-formyl-L-kynurenine to L-kynurenine, the second step in the kynurenine pathway of tryptophan degradation. The polypeptide is Kynurenine formamidase (Sphingopyxis alaskensis (strain DSM 13593 / LMG 18877 / RB2256) (Sphingomonas alaskensis)).